Consider the following 343-residue polypeptide: Cyclin-Y-like protein 1 (343 aa).

The segment at 1-48 (MGNTVTCCVSPDASPKAGRDRAVTERGEPYQAQVELQETDPGPHLQHI) is disordered. Positions 17-28 (AGRDRAVTERGE) are enriched in basic and acidic residues. Positions 145 to 267 (EIFDEKLHPL…FLELLQFNIN (123 aa)) constitute a Cyclin N-terminal domain.

Belongs to the cyclin family. Cyclin Y subfamily.

The protein localises to the cell membrane. Its function is as follows. Key regulator of Wnt signaling implicated in various biological processes, such as embryonic neurogenesis. The sequence is that of Cyclin-Y-like protein 1 (ccnyl1) from Xenopus tropicalis (Western clawed frog).